The primary structure comprises 195 residues: HTH-type transcriptional regulator BetI (195 aa).

The HTH tetR-type domain maps to 8-68 (SIRRRQLIDA…ATMRDITSQL (61 aa)). Residues 31–50 (TIAQIARRAGVSTGIISHYF) constitute a DNA-binding region (H-T-H motif).

It participates in amine and polyamine biosynthesis; betaine biosynthesis via choline pathway [regulation]. In terms of biological role, repressor involved in the biosynthesis of the osmoprotectant glycine betaine. It represses transcription of the choline transporter BetT and the genes of BetAB involved in the synthesis of glycine betaine. This is HTH-type transcriptional regulator BetI from Escherichia coli (strain K12 / DH10B).